The chain runs to 371 residues: tRNA-specific 2-thiouridylase MnmA (371 aa).

ATP contacts are provided by residues Gly-12–Ser-19 and Met-38. Residues Asn-98–Asp-100 form an interaction with target base in tRNA region. The Nucleophile role is filled by Cys-103. Cys-103 and Cys-200 form a disulfide bridge. Gly-128 is a binding site for ATP. The interval Lys-150 to Gln-152 is interaction with tRNA. The active-site Cysteine persulfide intermediate is Cys-200. Residues Arg-312 to Tyr-313 form an interaction with tRNA region.

This sequence belongs to the MnmA/TRMU family. In terms of assembly, interacts with TusE.

It localises to the cytoplasm. The catalysed reaction is S-sulfanyl-L-cysteinyl-[protein] + uridine(34) in tRNA + AH2 + ATP = 2-thiouridine(34) in tRNA + L-cysteinyl-[protein] + A + AMP + diphosphate + H(+). In terms of biological role, catalyzes the 2-thiolation of uridine at the wobble position (U34) of tRNA(Lys), tRNA(Glu) and tRNA(Gln), leading to the formation of s(2)U34, the first step of tRNA-mnm(5)s(2)U34 synthesis. Sulfur is provided by IscS, via a sulfur-relay system. Binds ATP and its substrate tRNAs. In Yersinia pestis bv. Antiqua (strain Antiqua), this protein is tRNA-specific 2-thiouridylase MnmA.